Consider the following 257-residue polypeptide: Deoxyribose-phosphate aldolase (257 aa).

Catalysis depends on aspartate 102, which acts as the Proton donor/acceptor. Lysine 166 (schiff-base intermediate with acetaldehyde) is an active-site residue. Lysine 198 functions as the Proton donor/acceptor in the catalytic mechanism.

It belongs to the DeoC/FbaB aldolase family. DeoC type 2 subfamily.

Its subcellular location is the cytoplasm. The enzyme catalyses 2-deoxy-D-ribose 5-phosphate = D-glyceraldehyde 3-phosphate + acetaldehyde. It functions in the pathway carbohydrate degradation; 2-deoxy-D-ribose 1-phosphate degradation; D-glyceraldehyde 3-phosphate and acetaldehyde from 2-deoxy-alpha-D-ribose 1-phosphate: step 2/2. In terms of biological role, catalyzes a reversible aldol reaction between acetaldehyde and D-glyceraldehyde 3-phosphate to generate 2-deoxy-D-ribose 5-phosphate. The protein is Deoxyribose-phosphate aldolase of Shewanella sediminis (strain HAW-EB3).